The primary structure comprises 573 residues: Solute carrier family 41 member 2 (573 aa).

Residues 1-162 (MTNSKGRSIT…KESSGIMALQ (162 aa)) are Extracellular-facing. Phosphoserine occurs at positions 136 and 137. A helical transmembrane segment spans residues 163 to 183 (ILVPFLLAGFGTVSAGMVLDI). The Cytoplasmic segment spans residues 184-195 (VQHWEVFRKVTE). The helical transmembrane segment at 196-216 (VFILVPALLGLKGNLEMTLAS) threads the bilayer. The Extracellular segment spans residues 217–245 (RLSTAVNIGKMDSPIEKWNLIIGNLALKQ). A helical transmembrane segment spans residues 246-266 (VQATVVGFLAAVAAIILGWIP). Over 267-282 (EGKYYLDHSILLCSSS) the chain is Cytoplasmic. Residues 283–303 (VATAFIASLLQGIIMVGVIVG) traverse the membrane as a helical segment. Over 304 to 313 (SKKTGINPDN) the chain is Extracellular. A helical membrane pass occupies residues 314–334 (VATPIAASFGDLITLAILAWI). Topologically, residues 335–347 (SQGLYSCLETYYY) are cytoplasmic. A helical transmembrane segment spans residues 348–368 (ISPLVGVFFLALTPIWIIIAA). Topologically, residues 369–376 (KHPATRTV) are extracellular. Residues 377-397 (LHSGWEPVITAMVISSIGGLI) form a helical membrane-spanning segment. Over 398-406 (LDTTVSDPN) the chain is Cytoplasmic. The chain crosses the membrane as a helical span at residues 407-427 (LVGIVVYTPVINGIGGNLVAI). Over 428 to 469 (QASRISTYLHLHSIPGELPDEPKGCYYPFRTFFGPGVNNKSA) the chain is Extracellular. A helical transmembrane segment spans residues 470–490 (QVLLLLVIPGHLIFLYTIHLM). Residues 491-498 (KSGHTSLT) are Cytoplasmic-facing. A helical membrane pass occupies residues 499 to 519 (IIFIVVYLFGAVLQVFTLLWI). Topologically, residues 520-543 (ADWMVHHFWRKGKDPDSFSIPYLT) are extracellular. The chain crosses the membrane as a helical span at residues 544-564 (ALGDLLGTALLALSFHFLWLI). Residues 565–573 (GDRDGDVGD) lie on the Cytoplasmic side of the membrane.

Belongs to the SLC41A transporter family.

The protein resides in the cell membrane. It carries out the reaction Mg(2+)(in) = Mg(2+)(out). The enzyme catalyses Mn(2+)(in) = Mn(2+)(out). It catalyses the reaction Co(2+)(in) = Co(2+)(out). The catalysed reaction is Ni(2+)(in) = Ni(2+)(out). It carries out the reaction Fe(2+)(in) = Fe(2+)(out). Its function is as follows. Acts as a plasma-membrane magnesium transporter. Can also mediate the transport of other divalent metal cations in an order of Ba(2+) &gt; Ni(2+) &gt; Co(2+) &gt; Fe(2+) &gt; Mn(2+). The sequence is that of Solute carrier family 41 member 2 (SLC41A2) from Homo sapiens (Human).